We begin with the raw amino-acid sequence, 112 residues long: Keratin-associated protein 12-4 (112 aa).

Tandem repeats lie at residues 10 to 14, 20 to 24, 25 to 29, 35 to 39, 41 to 45, 46 to 50, 56 to 60, 61 to 65, 66 to 70, 71 to 75, 76 to 80, 81 to 85, 86 to 90, 91 to 95, and 96 to 100. The interval 10 to 100 is 15 X 5 AA approximate repeats; the sequence is CPMACPGSPC…CCQPFCPTLV (91 aa).

The protein belongs to the KRTAP type 12 family. Interacts with hair keratins. Restricted to a narrow region of the hair fiber cuticle, lying approximately 20 cell layers above the apex of the dermal papilla of the hair root; not detected in any other tissues.

In terms of biological role, in the hair cortex, hair keratin intermediate filaments are embedded in an interfilamentous matrix, consisting of hair keratin-associated proteins (KRTAP), which are essential for the formation of a rigid and resistant hair shaft through their extensive disulfide bond cross-linking with abundant cysteine residues of hair keratins. The matrix proteins include the high-sulfur and high-glycine-tyrosine keratins. The sequence is that of Keratin-associated protein 12-4 (KRTAP12-4) from Homo sapiens (Human).